Here is a 578-residue protein sequence, read N- to C-terminus: Membrane protein insertase YidC (578 aa).

The helical transmembrane segment at 3-23 (IQRSILIVALAVVSYLLVLQW) threads the bilayer. The interval 34–72 (AASASMNTTQGLPDTPSASGTSSDVPTAQSSAAGSEAAD) is disordered. The span at 37 to 66 (ASMNTTQGLPDTPSASGTSSDVPTAQSSAA) shows a compositional bias: polar residues. A run of 5 helical transmembrane segments spans residues 361–381 (LELTVDYGFLWFIAQPIFWLL), 387–407 (LIGNWGWSIIALTVLIKLAFF), 457–477 (LGGCLPILVQMPVFLSLYWVL), 500–520 (PFFILPIVMGGTMLIQQMLNP), and 535–555 (PIIFTFFFLWFPAGLVLYWVV).

Belongs to the OXA1/ALB3/YidC family. Type 1 subfamily. In terms of assembly, interacts with the Sec translocase complex via SecD. Specifically interacts with transmembrane segments of nascent integral membrane proteins during membrane integration.

The protein resides in the cell inner membrane. Required for the insertion and/or proper folding and/or complex formation of integral membrane proteins into the membrane. Involved in integration of membrane proteins that insert both dependently and independently of the Sec translocase complex, as well as at least some lipoproteins. Aids folding of multispanning membrane proteins. This is Membrane protein insertase YidC from Pseudomonas aeruginosa (strain LESB58).